The following is a 330-amino-acid chain: tRNA-modifying protein YgfZ (330 aa).

Residues Trp-28 and Trp-190 each contribute to the folate site.

Belongs to the tRNA-modifying YgfZ family.

The protein localises to the cytoplasm. Functionally, folate-binding protein involved in regulating the level of ATP-DnaA and in the modification of some tRNAs. It is probably a key factor in regulatory networks that act via tRNA modification, such as initiation of chromosomal replication. The protein is tRNA-modifying protein YgfZ of Yersinia pseudotuberculosis serotype O:1b (strain IP 31758).